Reading from the N-terminus, the 372-residue chain is Heat-inducible transcription repressor HrcA (372 aa).

This sequence belongs to the HrcA family.

In terms of biological role, negative regulator of class I heat shock genes (grpE-dnaK-dnaJ and groELS operons). Prevents heat-shock induction of these operons. The chain is Heat-inducible transcription repressor HrcA from Chloroflexus aurantiacus (strain ATCC 29366 / DSM 635 / J-10-fl).